The following is a 344-amino-acid chain: Anthranilate phosphoribosyltransferase (344 aa).

Residues Gly-85, 88 to 89 (GD), Thr-93, 95 to 98 (NIST), 113 to 121 (KHGNRSVSS), and Ser-125 contribute to the 5-phospho-alpha-D-ribose 1-diphosphate site. Residue Gly-85 coordinates anthranilate. Residue Ser-97 participates in Mg(2+) binding. Position 116 (Asn-116) interacts with anthranilate. Arg-171 is an anthranilate binding site. Residues Asp-229 and Glu-230 each coordinate Mg(2+).

Belongs to the anthranilate phosphoribosyltransferase family. In terms of assembly, homodimer. Mg(2+) serves as cofactor.

The catalysed reaction is N-(5-phospho-beta-D-ribosyl)anthranilate + diphosphate = 5-phospho-alpha-D-ribose 1-diphosphate + anthranilate. The protein operates within amino-acid biosynthesis; L-tryptophan biosynthesis; L-tryptophan from chorismate: step 2/5. Its function is as follows. Catalyzes the transfer of the phosphoribosyl group of 5-phosphorylribose-1-pyrophosphate (PRPP) to anthranilate to yield N-(5'-phosphoribosyl)-anthranilate (PRA). This chain is Anthranilate phosphoribosyltransferase, found in Shewanella amazonensis (strain ATCC BAA-1098 / SB2B).